Here is a 707-residue protein sequence, read N- to C-terminus: DNA ligase (707 aa).

NAD(+) is bound by residues 36 to 40 (DADFD), 85 to 86 (SL), and Glu-116. The active-site N6-AMP-lysine intermediate is Lys-118. NAD(+) is bound by residues Arg-139, Glu-180, Lys-298, and Lys-322. Positions 416, 419, 434, and 440 each coordinate Zn(2+). Residues 613 to 707 (AASSKIAGRS…STHVDPERMV (95 aa)) form the BRCT domain.

Belongs to the NAD-dependent DNA ligase family. LigA subfamily. Requires Mg(2+) as cofactor. Mn(2+) serves as cofactor.

It carries out the reaction NAD(+) + (deoxyribonucleotide)n-3'-hydroxyl + 5'-phospho-(deoxyribonucleotide)m = (deoxyribonucleotide)n+m + AMP + beta-nicotinamide D-nucleotide.. In terms of biological role, DNA ligase that catalyzes the formation of phosphodiester linkages between 5'-phosphoryl and 3'-hydroxyl groups in double-stranded DNA using NAD as a coenzyme and as the energy source for the reaction. It is essential for DNA replication and repair of damaged DNA. In Nitrosospira multiformis (strain ATCC 25196 / NCIMB 11849 / C 71), this protein is DNA ligase.